A 288-amino-acid chain; its full sequence is Probable endonuclease 4 (288 aa).

Zn(2+)-binding residues include His-75, His-115, Glu-153, Asp-187, His-190, His-224, Asp-237, His-239, and Glu-269.

This sequence belongs to the AP endonuclease 2 family. The cofactor is Zn(2+).

It catalyses the reaction Endonucleolytic cleavage to 5'-phosphooligonucleotide end-products.. Its function is as follows. Endonuclease IV plays a role in DNA repair. It cleaves phosphodiester bonds at apurinic or apyrimidinic (AP) sites, generating a 3'-hydroxyl group and a 5'-terminal sugar phosphate. The sequence is that of Probable endonuclease 4 from Chlamydia trachomatis serovar A (strain ATCC VR-571B / DSM 19440 / HAR-13).